The sequence spans 864 residues: Leucine--tRNA ligase (864 aa).

Residues 42–52 (PYPSGKLHMGH) carry the 'HIGH' region motif. The short motif at 624–628 (KMSKS) is the 'KMSKS' region element. Lysine 627 provides a ligand contact to ATP.

The protein belongs to the class-I aminoacyl-tRNA synthetase family.

Its subcellular location is the cytoplasm. The enzyme catalyses tRNA(Leu) + L-leucine + ATP = L-leucyl-tRNA(Leu) + AMP + diphosphate. The sequence is that of Leucine--tRNA ligase from Burkholderia thailandensis (strain ATCC 700388 / DSM 13276 / CCUG 48851 / CIP 106301 / E264).